We begin with the raw amino-acid sequence, 512 residues long: ATP synthase subunit alpha, chloroplastic (512 aa).

170-177 (GDRQTGKT) provides a ligand contact to ATP.

Belongs to the ATPase alpha/beta chains family. As to quaternary structure, F-type ATPases have 2 components, CF(1) - the catalytic core - and CF(0) - the membrane proton channel. CF(1) has five subunits: alpha(3), beta(3), gamma(1), delta(1), epsilon(1). CF(0) has four main subunits: a, b, b' and c.

Its subcellular location is the plastid. It is found in the chloroplast thylakoid membrane. It catalyses the reaction ATP + H2O + 4 H(+)(in) = ADP + phosphate + 5 H(+)(out). Produces ATP from ADP in the presence of a proton gradient across the membrane. The alpha chain is a regulatory subunit. This is ATP synthase subunit alpha, chloroplastic from Chaetosphaeridium globosum (Charophycean green alga).